Consider the following 247-residue polypeptide: 6-phosphogluconolactonase (247 aa).

Belongs to the glucosamine/galactosamine-6-phosphate isomerase family. 6-phosphogluconolactonase subfamily.

The enzyme catalyses 6-phospho-D-glucono-1,5-lactone + H2O = 6-phospho-D-gluconate + H(+). It participates in carbohydrate degradation; pentose phosphate pathway; D-ribulose 5-phosphate from D-glucose 6-phosphate (oxidative stage): step 2/3. In terms of biological role, hydrolysis of 6-phosphogluconolactone to 6-phosphogluconate. This Mycobacterium leprae (strain TN) protein is 6-phosphogluconolactonase (pgl).